A 353-amino-acid chain; its full sequence is DNA integrity scanning protein DisA (353 aa).

The region spanning 6 to 144 (DKELMNILKI…GGIKYVLRDS (139 aa)) is the DAC domain. ATP is bound by residues Gly-73, Leu-91, and 104 to 108 (TRHRT).

The protein belongs to the DisA family. In terms of assembly, homooctamer. Requires Mg(2+) as cofactor.

It catalyses the reaction 2 ATP = 3',3'-c-di-AMP + 2 diphosphate. Functionally, participates in a DNA-damage check-point that is active prior to asymmetric division when DNA is damaged. DisA forms globular foci that rapidly scan along the chromosomes during sporulation, searching for lesions. When a lesion is present, DisA pauses at the lesion site. This triggers a cellular response that culminates in a temporary block in sporulation initiation. Also has diadenylate cyclase activity, catalyzing the condensation of 2 ATP molecules into cyclic di-AMP (c-di-AMP). c-di-AMP acts as a signaling molecule that couples DNA integrity with progression of sporulation. The rise in c-di-AMP level generated by DisA while scanning the chromosome, operates as a positive signal that advances sporulation; upon encountering a lesion, the DisA focus arrests at the damaged site and halts c-di-AMP synthesis. The sequence is that of DNA integrity scanning protein DisA from Clostridium botulinum (strain Kyoto / Type A2).